The chain runs to 259 residues: MALPDFNIRQLLEAGVHFGHQTQRWNPRMAPYIYGDRNGIHIMDLTQTVPMLDQALQAVRDTVAKGGRVLFVGTKRQAQKPIAEAAERCAQYYMNHRWLGGTLTNWKTVSNSIGRLKSIDEAMEGGFEGLTKKERLGMERDQGKLQASLGGIREMGGVPDLIFVIDVKKEDLAIAEANKLGIPVVAVVDTNCSPDGVDYVIPGNDDAARAIALYCDLVARAALDGMSAQLGAAGVDLGALEEGGVEEALAEEAAAPAES.

Belongs to the universal ribosomal protein uS2 family.

The chain is Small ribosomal subunit protein uS2 from Dinoroseobacter shibae (strain DSM 16493 / NCIMB 14021 / DFL 12).